The following is a 319-amino-acid chain: Nuclear hormone receptor family member nhr-174 (319 aa).

Positions 7–81 form a DNA-binding region, nuclear receptor; it reads DPVCPVCEFP…AGMKRNLVRQ (75 aa). 2 NR C4-type zinc fingers span residues 10-31 and 47-63; these read CPVCEFPSNVELHFGGLVCGAC and CEKKNQCKGKRKNCRAC. The NR LBD domain maps to 130–319; it reads EAEKDVSKIL…SMKKSRYLQF (190 aa).

Belongs to the nuclear hormone receptor family.

The protein resides in the nucleus. In terms of biological role, orphan nuclear receptor. The chain is Nuclear hormone receptor family member nhr-174 (nhr-174) from Caenorhabditis elegans.